A 589-amino-acid polypeptide reads, in one-letter code: Leucine-rich repeat and immunoglobulin-like domain-containing nogo receptor-interacting protein 3 (589 aa).

Residues 1 to 23 (MTCWLHMLGLHLLLLPTAPLAAG) form the signal peptide. An LRRNT domain is found at 24–53 (CPARCECSASTRTVACGRRRLTAIPEGIPA). Residues 24-528 (CPARCECSAS…LDLTTILVST (505 aa)) lie on the Extracellular side of the membrane. LRR repeat units lie at residues 54 to 75 (ETRMLELSRNRIRCLNPGDLAS), 78 to 99 (TLEELDLNHNVIAHVEPGAFAN), 102 to 123 (RLRVLRLRGNQLKLIPPGVFTH), 126 to 147 (SLTLLDLSENKLVILLDFSFQD), 150 to 171 (SLQRLEVGDNDLVFISRRAFAG), 174 to 195 (GLAELTLERCNLTSLSPESLGH), 206 to 227 (HLAIAALEDQNFQKLPGLSHLE), 246 to 267 (NLTSLSITHTNITAVPAAALRQ), 270 to 291 (HLTCLNLSHNPISMVPRGSFRD), 294 to 315 (RLRELHLAGALLAVIEPQAFVG), and 318 to 339 (QIRLLNLSDNLLSTLEENTFHS). Residue N184 is glycosylated (N-linked (GlcNAc...) asparagine). N-linked (GlcNAc...) asparagine glycans are attached at residues N246, N256, and N275. A glycan (N-linked (GlcNAc...) asparagine) is linked at N323. The LRRCT domain maps to 351-405 (NPLACDCRLLWIVQRRKTLNFDGRLPACATPAEVRGDALHNLPDSVLFEYFVCRK). In terms of domain architecture, Ig-like C2-type spans 406 to 495 (PKIRERRLQH…GNDTYFATLT (90 aa)). C428 and C479 form a disulfide bridge. N487, N501, and N509 each carry an N-linked (GlcNAc...) asparagine glycan. The helical transmembrane segment at 529–549 (AMGCITFLGVVLFCFLLLFVW) threads the bilayer. Topologically, residues 550–589 (SRGRGQHKNNFSVEYSFRKVDGPAAAAGQGGARKFNMKMI) are cytoplasmic.

It localises to the membrane. The chain is Leucine-rich repeat and immunoglobulin-like domain-containing nogo receptor-interacting protein 3 (Lingo3) from Mus musculus (Mouse).